A 62-amino-acid chain; its full sequence is Conorfamide-Tx1 (62 aa).

The N-terminal stretch at 1-19 (MSGRGFLLLALLLLVTVEA) is a signal peptide. The propeptide occupies 20–26 (TKVEKNK). Y46 carries the tyrosine amide modification. A propeptide spanning residues 47 to 62 (GRRDMQSPLLSERLRF) is cleaved from the precursor.

The protein belongs to the FARP (FMRFamide related peptide) family. Expressed by the venom duct.

It localises to the secreted. Functionally, this peptide does not show activity on human and mouse sensory neuron-specific G-protein coupled receptors MRGPRX1. The protein is Conorfamide-Tx1 of Conus textile (Cloth-of-gold cone).